Consider the following 473-residue polypeptide: NADH-quinone oxidoreductase subunit N (473 aa).

Helical transmembrane passes span 3–23 (LHYL…LVIA), 30–50 (LAFY…CSLL), 62–82 (FSSM…FLWL), 99–119 (FYLL…SEHF), 120–140 (ASFF…IAYS), 153–173 (YLIL…IVYL), 195–215 (MLFT…LSLV), 230–252 (LPTT…WKLF), 262–282 (IVLT…NLLA), 291–311 (ILAF…FLFN), 326–346 (ALLF…SILM), 368–388 (AASL…LGFM), 408–428 (FLVI…MVML), and 444–464 (VASL…PALF).

This sequence belongs to the complex I subunit 2 family. As to quaternary structure, NDH-1 is composed of 13 different subunits. Subunits NuoA, H, J, K, L, M, N constitute the membrane sector of the complex.

It localises to the cell inner membrane. The catalysed reaction is a quinone + NADH + 5 H(+)(in) = a quinol + NAD(+) + 4 H(+)(out). Its function is as follows. NDH-1 shuttles electrons from NADH, via FMN and iron-sulfur (Fe-S) centers, to quinones in the respiratory chain. The immediate electron acceptor for the enzyme in this species is believed to be ubiquinone. Couples the redox reaction to proton translocation (for every two electrons transferred, four hydrogen ions are translocated across the cytoplasmic membrane), and thus conserves the redox energy in a proton gradient. This is NADH-quinone oxidoreductase subunit N from Shewanella woodyi (strain ATCC 51908 / MS32).